A 249-amino-acid polypeptide reads, in one-letter code: Phosphate import ATP-binding protein PstB (249 aa).

The ABC transporter domain maps to 4-244; that stretch reads VKIKDLSLFY…PQDKRTEDYI (241 aa). ATP is bound at residue 36–43; sequence GPSGCGKS.

Belongs to the ABC transporter superfamily. Phosphate importer (TC 3.A.1.7) family. The complex is composed of two ATP-binding proteins (PstB), two transmembrane proteins (PstC and PstA) and a solute-binding protein (PstS).

Its subcellular location is the cell membrane. It carries out the reaction phosphate(out) + ATP + H2O = ADP + 2 phosphate(in) + H(+). Functionally, part of the ABC transporter complex PstSACB involved in phosphate import. Responsible for energy coupling to the transport system. This Clostridium tetani (strain Massachusetts / E88) protein is Phosphate import ATP-binding protein PstB.